A 282-amino-acid polypeptide reads, in one-letter code: Nucleotide-binding protein XCV3122 (282 aa).

Residue 5–12 coordinates ATP; sequence GLSGSGKS. 57 to 60 provides a ligand contact to GTP; that stretch reads DVRS.

This sequence belongs to the RapZ-like family.

Displays ATPase and GTPase activities. In Xanthomonas euvesicatoria pv. vesicatoria (strain 85-10) (Xanthomonas campestris pv. vesicatoria), this protein is Nucleotide-binding protein XCV3122.